A 284-amino-acid polypeptide reads, in one-letter code: ELMO domain-containing protein B (284 aa).

One can recognise an ELMO domain in the interval E124–S276.

The sequence is that of ELMO domain-containing protein B (elmoB) from Dictyostelium discoideum (Social amoeba).